Reading from the N-terminus, the 211-residue chain is Protein 33K (211 aa).

Disordered regions lie at residues 1–95 (MPPK…PCSL) and 107–140 (AGSP…QDSP). Residues 24–65 (DEEETWDDSQAEEVSDEEAEEQMESWDSLDEEDLEDVEEETI) show a composition bias toward acidic residues. Positions 83–92 (KTIPPLPPQP) are enriched in pro residues. Residues 129–140 (TSSAIATRQDSP) show a composition bias toward polar residues. The necessary for nuclear subcellular location stretch occupies residues 154-181 (YAIFQQSRGQQLELKVKNRSLRSLTRSC). Residues 160-180 (SRGQQLELKVKNRSLRSLTRS) are RS-repeat; required for splicing enhancer activity.

It belongs to the adenoviridae splicing factor family. Homooligomer. Interacts with DBP; this interaction occurs at a unique vertex during genome packaging. Interacts with IVa2; this interaction occurs at a unique vertex during genome packaging and seems to potentiate IVa2 and 33K oligomerization. In terms of processing, phosphorylated in vitro by human PKA and PRKDC. PRKDC inhibits, whereas PKA activates the splicing factor.

The protein resides in the host nucleus. Promotes alternative splicing of late transcripts by promoting splicing at weak 3' splice sites. Required for the temporal activation of major late pre-mRNA splicing at late times of infection. Induces the splicing and expression of the late capsid vertex protein. Its function is as follows. Probably functions as the small terminase that is part of the molecular motor that translocates genomic DNA in empty capsid during DNA packaging. This motor is located at a unique vertex and comprises at least the IVa2 ATPase, the small terminase 33K and probably a portal. Forms a ring-like structure of about 17 nm in which genomic DNA is translocated into the capsid. Stimulates IVa2 ATPase activity in the presence of the viral genome. Once the DNA is packaged, the terminase detaches: the 33K protein is present in the empty particles, but not in the mature virions. Also involved in virion assembly. The protein is Protein 33K of Human adenovirus F serotype 40 (HAdV-40).